The sequence spans 605 residues: Glucose oxidase (605 aa).

Positions 1-18 are cleaved as a signal peptide; sequence MVSVFLSTLLLAAATVQA. Residues Leu-52, Thr-53, and Glu-73 each coordinate FAD. Asn-111 carries N-linked (GlcNAc...) asparagine glycosylation. Residues Ser-125, Asn-129, Gly-130, and Ser-132 each coordinate FAD. Asn-183 and Asn-190 each carry an N-linked (GlcNAc...) asparagine glycan. A disulfide bridge connects residues Cys-186 and Cys-228. FAD is bound at residue Val-272. 4 N-linked (GlcNAc...) asparagine glycosylation sites follow: Asn-335, Asn-375, Asn-410, and Asn-519. The Proton acceptor role is filled by His-538. The O2 site is built by Lys-559 and Val-560. The FAD site is built by Gly-571 and Met-583.

The protein belongs to the GMC oxidoreductase family. As to quaternary structure, homodimer. The cofactor is FAD.

The protein resides in the secreted. It is found in the cell wall. The protein localises to the cytoplasmic vesicle. The catalysed reaction is beta-D-glucose + O2 = D-glucono-1,5-lactone + H2O2. Glucose oxidase catalyzes the oxidation of beta-D-glucose to D-glucono-delta-lactone and hydrogen peroxide in the presence of molecular oxygen. D-glucono-delta-lactone is sequentially hydrolyzed by lactonase to D-gluconic acid, and the resulting hydrogen peroxide is hydrolyzed by catalase to oxygen and water. Glucose oxidase alone indirectly causes toxicity in the presence of glucose and is the active compound of the antifungal antibiotic talaron. Responsible for inhibition of germination of microsclerotia of Verticillium dahliae. In Talaromyces flavus, this protein is Glucose oxidase.